A 379-amino-acid polypeptide reads, in one-letter code: Succinyl-diaminopimelate desuccinylase (379 aa).

Histidine 70 is a binding site for Zn(2+). Residue aspartate 72 is part of the active site. Aspartate 103 provides a ligand contact to Zn(2+). The Proton acceptor role is filled by glutamate 137. Zn(2+) is bound by residues glutamate 138, glutamate 166, and histidine 352.

The protein belongs to the peptidase M20A family. DapE subfamily. As to quaternary structure, homodimer. The cofactor is Zn(2+). Co(2+) serves as cofactor.

The enzyme catalyses N-succinyl-(2S,6S)-2,6-diaminopimelate + H2O = (2S,6S)-2,6-diaminopimelate + succinate. Its pathway is amino-acid biosynthesis; L-lysine biosynthesis via DAP pathway; LL-2,6-diaminopimelate from (S)-tetrahydrodipicolinate (succinylase route): step 3/3. Catalyzes the hydrolysis of N-succinyl-L,L-diaminopimelic acid (SDAP), forming succinate and LL-2,6-diaminopimelate (DAP), an intermediate involved in the bacterial biosynthesis of lysine and meso-diaminopimelic acid, an essential component of bacterial cell walls. In Burkholderia cenocepacia (strain HI2424), this protein is Succinyl-diaminopimelate desuccinylase.